A 603-amino-acid polypeptide reads, in one-letter code: Isocitrate dehydrogenase kinase/phosphatase (603 aa).

Residues 327-333 (APGIKGL) and lysine 348 each bind ATP. Aspartate 383 is a catalytic residue.

This sequence belongs to the AceK family.

Its subcellular location is the cytoplasm. The catalysed reaction is L-seryl-[isocitrate dehydrogenase] + ATP = O-phospho-L-seryl-[isocitrate dehydrogenase] + ADP + H(+). Functionally, bifunctional enzyme which can phosphorylate or dephosphorylate isocitrate dehydrogenase (IDH) on a specific serine residue. This is a regulatory mechanism which enables bacteria to bypass the Krebs cycle via the glyoxylate shunt in response to the source of carbon. When bacteria are grown on glucose, IDH is fully active and unphosphorylated, but when grown on acetate or ethanol, the activity of IDH declines drastically concomitant with its phosphorylation. The chain is Isocitrate dehydrogenase kinase/phosphatase from Burkholderia mallei (strain ATCC 23344).